A 314-amino-acid polypeptide reads, in one-letter code: Serine/threonine-protein phosphatase PP2A-4 catalytic subunit (314 aa).

Mn(2+)-binding residues include aspartate 62, histidine 64, aspartate 90, and asparagine 122. The Proton donor role is filled by histidine 123. 2 residues coordinate Mn(2+): histidine 172 and histidine 246.

Belongs to the PPP phosphatase family. PP-2A subfamily. Mn(2+) is required as a cofactor.

Its subcellular location is the cytoplasm. The enzyme catalyses O-phospho-L-seryl-[protein] + H2O = L-seryl-[protein] + phosphate. It catalyses the reaction O-phospho-L-threonyl-[protein] + H2O = L-threonyl-[protein] + phosphate. In Oryza sativa subsp. japonica (Rice), this protein is Serine/threonine-protein phosphatase PP2A-4 catalytic subunit (PP2A4).